Consider the following 130-residue polypeptide: Ribosome-binding factor A (130 aa).

It belongs to the RbfA family. Monomer. Binds 30S ribosomal subunits, but not 50S ribosomal subunits or 70S ribosomes.

The protein localises to the cytoplasm. In terms of biological role, one of several proteins that assist in the late maturation steps of the functional core of the 30S ribosomal subunit. Associates with free 30S ribosomal subunits (but not with 30S subunits that are part of 70S ribosomes or polysomes). Required for efficient processing of 16S rRNA. May interact with the 5'-terminal helix region of 16S rRNA. The polypeptide is Ribosome-binding factor A (Flavobacterium psychrophilum (strain ATCC 49511 / DSM 21280 / CIP 103535 / JIP02/86)).